Reading from the N-terminus, the 311-residue chain is Regulator of rDNA transcription protein 6 (311 aa).

The next 2 helical transmembrane spans lie at 32–52 (PHLL…SAEL) and 271–291 (YLIV…IIVT).

Its subcellular location is the membrane. May be involved in the modulation of rDNA transcription. This chain is Regulator of rDNA transcription protein 6 (RRT6), found in Saccharomyces cerevisiae (strain ATCC 204508 / S288c) (Baker's yeast).